The primary structure comprises 38 residues: Photosystem II reaction center protein L (38 aa).

A helical membrane pass occupies residues 17-37 (SLYWGLLLIFVLAVSFSNYFF).

Belongs to the PsbL family. In terms of assembly, PSII is composed of 1 copy each of membrane proteins PsbA, PsbB, PsbC, PsbD, PsbE, PsbF, PsbH, PsbI, PsbJ, PsbK, PsbL, PsbM, PsbT, PsbX, PsbY, PsbZ, Psb30/Ycf12, at least 3 peripheral proteins of the oxygen-evolving complex and a large number of cofactors. It forms dimeric complexes.

It localises to the plastid. It is found in the chloroplast thylakoid membrane. In terms of biological role, one of the components of the core complex of photosystem II (PSII). PSII is a light-driven water:plastoquinone oxidoreductase that uses light energy to abstract electrons from H(2)O, generating O(2) and a proton gradient subsequently used for ATP formation. It consists of a core antenna complex that captures photons, and an electron transfer chain that converts photonic excitation into a charge separation. This subunit is found at the monomer-monomer interface and is required for correct PSII assembly and/or dimerization. This is Photosystem II reaction center protein L from Amborella trichopoda.